The sequence spans 397 residues: ORC1-type DNA replication protein 8 (397 aa).

ATP-binding positions include 61-65, Tyr211, and Arg223; that span reads VGKTA.

Belongs to the CDC6/cdc18 family.

Its function is as follows. Involved in regulation of DNA replication. The chain is ORC1-type DNA replication protein 8 (orc8) from Halobacterium salinarum (strain ATCC 700922 / JCM 11081 / NRC-1) (Halobacterium halobium).